The chain runs to 59 residues: SPbeta prophage-derived uncharacterized protein YosB (59 aa).

This chain is SPbeta prophage-derived uncharacterized protein YosB (yosB), found in Bacillus subtilis (strain 168).